Reading from the N-terminus, the 371-residue chain is Peptide chain release factor 2 (371 aa).

Residue Gln253 is modified to N5-methylglutamine.

This sequence belongs to the prokaryotic/mitochondrial release factor family. In terms of processing, methylated by PrmC. Methylation increases the termination efficiency of RF2.

It localises to the cytoplasm. Functionally, peptide chain release factor 2 directs the termination of translation in response to the peptide chain termination codons UGA and UAA. This chain is Peptide chain release factor 2 (prfB), found in Mycobacterium bovis (strain ATCC BAA-935 / AF2122/97).